A 553-amino-acid chain; its full sequence is Solute carrier family 22 member 12 (553 aa).

The helical transmembrane segment at 16–36 (FQLLQAVALVTPILWVTTQNM) threads the bilayer. 3 N-linked (GlcNAc...) asparagine glycosylation sites follow: Asn-56, Asn-102, and Asn-107. 11 consecutive transmembrane segments (helical) span residues 146–166 (PMAQ…CGHA), 182–202 (LVSV…YCLF), 204–224 (FLVA…LMEW), 232–252 (LMMT…GSVA), 260–280 (MLQL…WWLP), 351–371 (FISM…ALDL), 378–398 (IFLL…GSLL), 407–427 (LCQA…ILVP), 435–455 (SSLA…VTIF), 466–486 (MTAV…GPLV), and 495–515 (WLPL…ALLL). A Phosphoserine modification is found at Ser-534.

This sequence belongs to the major facilitator (TC 2.A.1) superfamily. Organic cation transporter (TC 2.A.1.19) family. In terms of assembly, interacts with PDZK1. Post-translationally, N-glycosylated. In terms of tissue distribution, expressed in the proximal tubular epithelial cells in kidney.

It localises to the apical cell membrane. The enzyme catalyses urate(out) + (S)-lactate(in) = urate(in) + (S)-lactate(out). It catalyses the reaction nicotinate(in) + urate(out) = nicotinate(out) + urate(in). It carries out the reaction urate(out) + n chloride(in) = urate(in) + n chloride(out). The catalysed reaction is orotate(out) + nicotinate(in) = orotate(in) + nicotinate(out). In terms of biological role, electroneutral antiporter that translocates urate across the apical membrane of proximal tubular cells in exchange for monovalent organic or inorganic anions. Involved in renal reabsorption of urate and helps maintaining blood levels of uric acid. Mediates urate uptake by an exchange with organic anions such as (S)-lactate and nicotinate, and inorganic anion Cl(-). Other inorganic anions such as Br(-), I(-) and NO3(-) may also act as counteranions that exchange for urate. Also mediates orotate tubular uptake coupled with nicotinate efflux and to a lesser extent with lactate efflux, therefore displaying a potential role in orotate renal reabsorption. Orotate transport is Cl(-)-dependent. The sequence is that of Solute carrier family 22 member 12 (Slc22a12) from Rattus norvegicus (Rat).